A 399-amino-acid chain; its full sequence is Exodeoxyribonuclease 7 large subunit (399 aa).

Belongs to the XseA family. Heterooligomer composed of large and small subunits.

It is found in the cytoplasm. The catalysed reaction is Exonucleolytic cleavage in either 5'- to 3'- or 3'- to 5'-direction to yield nucleoside 5'-phosphates.. In terms of biological role, bidirectionally degrades single-stranded DNA into large acid-insoluble oligonucleotides, which are then degraded further into small acid-soluble oligonucleotides. The chain is Exodeoxyribonuclease 7 large subunit from Clostridium botulinum (strain Eklund 17B / Type B).